Here is a 248-residue protein sequence, read N- to C-terminus: Membrane-spanning 4-domains subfamily A member 6A (248 aa).

Topologically, residues 1–46 (MTSQPVPNETIIVLPSNVINFSQAEKPEPTNQGQDSLKKHLHAEIK) are cytoplasmic. A helical transmembrane segment spans residues 47-67 (VIGTIQILCGMMVLSLGIILA). Residues 68–84 (SASFSPNFTQVTSTLLN) are Extracellular-facing. The helical transmembrane segment at 85–105 (SAYPFIGPFFFIISGSLSIAT) threads the bilayer. The Cytoplasmic portion of the chain corresponds to 106–116 (EKRLTKLLVHS). A helical transmembrane segment spans residues 117-137 (SLVGSILSALSALVGFIILSV). The Extracellular segment spans residues 138 to 185 (KQATLNPASLQCELDKNNIPTRSYVSYFYHDSLYTTDCYTAKASLAGT). Residues 186–206 (LSLMLICTLLEFCLAVLTAVL) form a helical membrane-spanning segment. Over 207 to 248 (RWKQAYSDFPGSVLFLPHSYIGNSGMSSKMTHDCGYEELLTS) the chain is Cytoplasmic.

The protein belongs to the MS4A family. Variable expression in some B-cell, myelomonocytic, and erythroleukemia cell lines.

The protein resides in the membrane. In terms of biological role, may be involved in signal transduction as a component of a multimeric receptor complex. This is Membrane-spanning 4-domains subfamily A member 6A (MS4A6A) from Homo sapiens (Human).